The following is a 282-amino-acid chain: U1 small nuclear ribonucleoprotein A (282 aa).

Alanine 2 carries the N-acetylalanine modification. Residues 10 to 89 enclose the RRM 1 domain; the sequence is HTIYINNLNE…KPMRIQYAKT (80 aa). N6-acetyllysine is present on lysine 60. The disordered stretch occupies residues 100–132; sequence TFVERDRKREKRKPKSQETPATKKAVQGGGATP. Threonine 131 bears the Phosphothreonine mark. Residue arginine 152 is modified to Omega-N-methylarginine. Positions 208-282 constitute an RRM 2 domain; the sequence is HILFLTNLPE…NAMKISFAKK (75 aa).

Belongs to the RRM U1 A/B'' family. U1 snRNP is composed of the 7 core Sm proteins SNRPB, SNRPD1, SNRPD2, SNRPD3, SNRPE, SNRPF and SNRPG that assemble in a heptameric protein ring on the Sm site of the small nuclear RNA to form the core snRNP, and at least three U1 snRNP-specific proteins SNRNP70/U1-70K, SNRPA/U1-A and SNRPC/U1-C. Interacts with SFPQ; component of a snRNP-free complex with SFPQ. Interacts with IVNS1ABP (via BACK domain); the interaction is indirect.

Its subcellular location is the nucleus. Component of the spliceosomal U1 snRNP, which is essential for recognition of the pre-mRNA 5' splice-site and the subsequent assembly of the spliceosome. U1 snRNP is the first snRNP to interact with pre-mRNA. This interaction is required for the subsequent binding of U2 snRNP and the U4/U6/U5 tri-snRNP. SNRPA binds stem loop II of U1 snRNA. In a snRNP-free form (SF-A) may be involved in coupled pre-mRNA splicing and polyadenylation process. May bind preferentially to the 5'-UGCAC-3' motif on RNAs. The protein is U1 small nuclear ribonucleoprotein A (SNRPA) of Homo sapiens (Human).